The following is a 790-amino-acid chain: Kinesin-like protein KIN-14D (790 aa).

2 disordered regions span residues 1-56 (MPLR…DVGS) and 116-139 (DKENLSSSLQSAEKRYSDKELDAK). The interval 1–66 (MPLRNQNRAP…TEECGKVEFT (66 aa)) is globular. Residues 16–33 (VKKEALSSIPFDKRRKET) show a composition bias toward basic and acidic residues. The segment covering 34 to 55 (QGTGRRQVLSTVNRQDANSDVG) has biased composition (polar residues). Coiled-coil stretches lie at residues 117–316 (KENL…HVVQ) and 347–426 (SLEE…LELK). A compositionally biased stretch (basic and acidic residues) spans 127–139 (AEKRYSDKELDAK). Positions 428-769 (NIRVFCRVRP…LRFAARVNAC (342 aa)) constitute a Kinesin motor domain. ATP is bound at residue 513-520 (GQTGSGKT).

It belongs to the TRAFAC class myosin-kinesin ATPase superfamily. Kinesin family. KIN-14 subfamily. As to expression, slightly expressed in anther lobes with pollen mother cells at anther stage 5. Strongly expressed at anther stage 6 in the tapetum and meiotic cells. Also detected in the gynoecium and the ovule.

It is found in the cytoplasm. It localises to the cytoskeleton. The protein localises to the phragmoplast. Kinesin that supports microtubule movement in an ATP-dependent manner and that functions as a minus-end directed motor as well as a plus-end tracking protein. During mitosis, is involved in early spindle assembly. Participates in the capture of antiparallel interpolar microtubules and helps in generating force to coalign microtubules. In Arabidopsis thaliana (Mouse-ear cress), this protein is Kinesin-like protein KIN-14D.